The sequence spans 314 residues: Olfactory receptor 51G2 (314 aa).

The Extracellular portion of the chain corresponds to 1–30; sequence MTLGSLGNSSSSVSATFLLSGIPGLERMHI. Asparagine 8 carries N-linked (GlcNAc...) asparagine glycosylation. A helical membrane pass occupies residues 31–51; sequence WISIPLCFMYLVSIPGNCTIL. Residues 52–59 lie on the Cytoplasmic side of the membrane; that stretch reads FIIKTERS. Residues 60–80 traverse the membrane as a helical segment; sequence LHEPMYLFLSMLALIDLGLSL. Residues 81–104 lie on the Extracellular side of the membrane; it reads CTLPTVLGIFWVGAREISHDACFA. A disulfide bridge connects residues cysteine 102 and cysteine 194. A helical membrane pass occupies residues 105 to 125; it reads QLFFIHCFSFLESSVLLSMAF. Topologically, residues 126-144 are cytoplasmic; the sequence is DRFVAICHPLHYVSILTNT. A helical transmembrane segment spans residues 145–165; the sequence is VIGRIGLVSLGRSVALIFPLP. Residues 166 to 201 are Extracellular-facing; the sequence is FMLKRFPYCGSPVLSHSYCLHQEVMKLACADMKANS. Residues 202–222 form a helical membrane-spanning segment; the sequence is IYGMFVIVSTVGIDSLLILFS. At 223 to 242 the chain is on the cytoplasmic side; it reads YALILRTVLSIASRAERFKA. The chain crosses the membrane as a helical span at residues 243–263; that stretch reads LNTCVSHICAVLLFYTPMIGL. Topologically, residues 264–278 are extracellular; the sequence is SVIHRFGKQAPHLVQ. A helical membrane pass occupies residues 279 to 299; it reads VVMGFMYLLFPPVMNPIVYSV. Residues 300 to 314 are Cytoplasmic-facing; sequence KTKQIRDRVTHAFCY.

This sequence belongs to the G-protein coupled receptor 1 family.

Its subcellular location is the cell membrane. Functionally, odorant receptor. The chain is Olfactory receptor 51G2 (OR51G2) from Homo sapiens (Human).